A 219-amino-acid chain; its full sequence is Probable nicotinate-nucleotide adenylyltransferase (219 aa).

It belongs to the NadD family.

The enzyme catalyses nicotinate beta-D-ribonucleotide + ATP + H(+) = deamido-NAD(+) + diphosphate. It participates in cofactor biosynthesis; NAD(+) biosynthesis; deamido-NAD(+) from nicotinate D-ribonucleotide: step 1/1. In terms of biological role, catalyzes the reversible adenylation of nicotinate mononucleotide (NaMN) to nicotinic acid adenine dinucleotide (NaAD). The polypeptide is Probable nicotinate-nucleotide adenylyltransferase (Hahella chejuensis (strain KCTC 2396)).